Consider the following 376-residue polypeptide: T-box transcription factor 18 (376 aa).

Over residues serine 38–proline 63 the composition is skewed to low complexity. Residues serine 38–proline 76 are disordered. The T-box DNA-binding region spans leucine 171–lysine 364.

It is found in the nucleus. Its function is as follows. Transcriptional regulator involved in developmental processes. Directly binds to the promoter region of the sex-determining factor xol-1 to activate its transcription. Its activation of xol-1 transcription controls sex determination and X chromosome dosage compensation to promote male development. Has a role in the fox-1-sex-1-mediated determination of sexual fate. The sequence is that of T-box transcription factor 18 from Caenorhabditis elegans.